Here is a 482-residue protein sequence, read N- to C-terminus: Replication factor C large subunit (482 aa).

46 to 53 (GPPGSGKT) is a binding site for ATP. The disordered stretch occupies residues 420–482 (EKETPKKKKK…KKQATLDSFF (63 aa)). Positions 442 to 476 (KISEPPKEPLKEVIEETVEKTDKKEKEKKDPKKQA) are enriched in basic and acidic residues.

The protein belongs to the activator 1 small subunits family. RfcL subfamily. Heteromultimer composed of small subunits (RfcS) and large subunits (RfcL).

In terms of biological role, part of the RFC clamp loader complex which loads the PCNA sliding clamp onto DNA. This Methanococcus maripaludis (strain C7 / ATCC BAA-1331) protein is Replication factor C large subunit.